Here is an 800-residue protein sequence, read N- to C-terminus: MLISNEWLKDYVDAGVKVEDLAERITRTGIEVDDMIDYSKDIKNLVVGYIQSKEKHPDADKLNICQVDIGEEEPVQIVCGAPNVDAGQHVIVAKVGGRLPGGIKIKRAKLRGERSEGMICSLQEIGISSNVVPKAYENGIFVFQTEVEPGTDALTALYLNDQVMEFDLTPNRADALSMVGTAYEVAALYQTEMTKPETQSNETSESATNELSVTIDNPEKVPYYSARVVKNVSIEPSPIWVQARLIKAGIRPINNVVDISNYVLLEYGQPLHMFDQDHIGSKEIVVRQAKDEETMTTLDNNERKLVDTDIVISNGQEPIALAGVMGGDFSEVTEQTTNVVIEGAIFDPVSIRHTSRRLNLRSEASSRFEKGIATEFVDEAVDRACYLLQELASGEVLQDRVSSGDLGSFVTPIDITAEKVNKTIGFNLSNDEIQSIFRQLGFETTLKGETLTVNVPSRRKDITIKEDLIEEVARIYGYDEIPSSLPVFGEVTSGELTDRQHKTRTLKETLEGAGLNQAITYSLVSKDHAKDFALQERPTISLLMPMSEAHATLRQSLLPHLIEATAYNVARKNKDVRLYEIGRVFFGNGEGELPDEVEYLSGILTGEYVVNAWQGKKEEIDFFIAKGVVDRVAEKLNLEFSYKAGKIEGLHPGRTAIVSLEGQDIGFIGELHPQVAADNDLKRTYVFELNYDAMMQVAVGYINYEQIPKFPGVTRDIALEVNHDVPSSELKQIIHNNGEDILQSTLVFDVYEGEHLEKGKKSVAIRLNYLDTEDTLTDERVSKIHDKILEALQAQGATIR.

Residues 39-154 (SKDIKNLVVG…TEVEPGTDAL (116 aa)) form the tRNA-binding domain. The B5 domain maps to 408-483 (SFVTPIDITA…RIYGYDEIPS (76 aa)). Mg(2+) contacts are provided by aspartate 461, aspartate 467, glutamate 470, and glutamate 471. Residues 708 to 800 (PKFPGVTRDI…ALQAQGATIR (93 aa)) form the FDX-ACB domain.

The protein belongs to the phenylalanyl-tRNA synthetase beta subunit family. Type 1 subfamily. As to quaternary structure, tetramer of two alpha and two beta subunits. It depends on Mg(2+) as a cofactor.

Its subcellular location is the cytoplasm. The enzyme catalyses tRNA(Phe) + L-phenylalanine + ATP = L-phenylalanyl-tRNA(Phe) + AMP + diphosphate + H(+). In Staphylococcus haemolyticus (strain JCSC1435), this protein is Phenylalanine--tRNA ligase beta subunit.